Reading from the N-terminus, the 152-residue chain is Leptin (152 aa).

The first 26 residues, 1–26 (MDHILALVLALLPLSLCVALPGALDA), serve as a signal peptide directing secretion. Cysteine 109 and cysteine 152 form a disulfide bridge.

This sequence belongs to the leptin family. As to expression, expressed mostly in the liver.

It localises to the secreted. In terms of biological role, may function as part of a signaling pathway that acts to regulate the size of the body fat depot. The chain is Leptin (lep) from Takifugu rubripes (Japanese pufferfish).